Consider the following 345-residue polypeptide: Aspartate--ammonia ligase (345 aa).

The protein belongs to the class-II aminoacyl-tRNA synthetase family. AsnA subfamily.

The protein resides in the cytoplasm. It carries out the reaction L-aspartate + NH4(+) + ATP = L-asparagine + AMP + diphosphate + H(+). It participates in amino-acid biosynthesis; L-asparagine biosynthesis; L-asparagine from L-aspartate (ammonia route): step 1/1. This chain is Aspartate--ammonia ligase, found in Bacteroides fragilis (strain ATCC 25285 / DSM 2151 / CCUG 4856 / JCM 11019 / LMG 10263 / NCTC 9343 / Onslow / VPI 2553 / EN-2).